The primary structure comprises 443 residues: Ribosomal protein uS12 methylthiotransferase RimO (443 aa).

In terms of domain architecture, MTTase N-terminal spans 5-115; the sequence is PNIGFISLGC…VMKHVHKYVP (111 aa). Residues Cys14, Cys50, Cys79, Cys147, Cys151, and Cys154 each contribute to the [4Fe-4S] cluster site. The 242-residue stretch at 133-374 folds into the Radical SAM core domain; that stretch reads LTPKHYAYLK…MQVQQRISAA (242 aa). The TRAM domain maps to 377–443; that stretch reads QQKVGKTLAV…ADEYDLWGTC (67 aa).

This sequence belongs to the methylthiotransferase family. RimO subfamily. [4Fe-4S] cluster is required as a cofactor.

Its subcellular location is the cytoplasm. The catalysed reaction is L-aspartate(89)-[ribosomal protein uS12]-hydrogen + (sulfur carrier)-SH + AH2 + 2 S-adenosyl-L-methionine = 3-methylsulfanyl-L-aspartate(89)-[ribosomal protein uS12]-hydrogen + (sulfur carrier)-H + 5'-deoxyadenosine + L-methionine + A + S-adenosyl-L-homocysteine + 2 H(+). In terms of biological role, catalyzes the methylthiolation of an aspartic acid residue of ribosomal protein uS12. This is Ribosomal protein uS12 methylthiotransferase RimO from Actinobacillus pleuropneumoniae serotype 7 (strain AP76).